We begin with the raw amino-acid sequence, 277 residues long: Protein HEAT-INDUCED TAS1 TARGET 1 (277 aa).

This sequence belongs to the heat induced plant HTT protein family. Interacts with the heat shock proteins HSP70-14 and At2g33735/HSP40, and with NFYC2 in both cytoplasm and nucleus. Expressed ubiquitously, including in seedlings, leaves, stems, inflorescences and siliques.

The protein resides in the cytoplasm. Its subcellular location is the nucleus. Functionally, mediates both basal and acquired thermotolerance via HSFA1s-directed pathways (e.g. HSFA1A, HSFA1B, and HSFA1D). Triggers the expression of HSFA1A and HSFA1B. This Arabidopsis thaliana (Mouse-ear cress) protein is Protein HEAT-INDUCED TAS1 TARGET 1.